The sequence spans 359 residues: Endosome-associated-trafficking regulator 1 (359 aa).

Phosphoserine is present on residues Ser18 and Ser74. The segment at 100 to 125 is required for interaction with PTPN13; it reads LLDEDEDEEDGWNGAYLPSAMEQTHS. A disordered region spans residues 153–180; it reads SLPPWTLSDSDSRISPTGSPSADFTAHG. Residues 159–174 show a composition bias toward polar residues; that stretch reads LSDSDSRISPTGSPSA. Residues Ser167 and Ser171 each carry the phosphoserine modification. Residues 185–295 adopt a coiled-coil conformation; sequence DRHLRTLQIS…FKRENEALRS (111 aa).

Belongs to the ENTR1 family. In terms of assembly, found in a complex with ENTR1, PTPN13 and GIT1. Interacts with PTPN13 (via the FERM domain). Interacts (via N-terminus) with GIT1 (via N- and C-terminus); this interaction is direct. Interacts with NOD2. Interacts (via N-terminus) with IFT88. Interacts with VPS35. Post-translationally, phosphorylated.

The protein localises to the cytoplasm. It is found in the early endosome. It localises to the endosome. The protein resides in the recycling endosome. Its subcellular location is the midbody. The protein localises to the cytoskeleton. It is found in the microtubule organizing center. It localises to the centrosome. The protein resides in the cilium basal body. Endosome-associated protein that plays a role in membrane receptor sorting, cytokinesis and ciliogenesis. Involved in the endosome-to-plasma membrane trafficking and recycling of SNX27-retromer-dependent cargo proteins, such as GLUT1. Involved in the regulation of cytokinesis; the function may involve PTPN13 and GIT1. Plays a role in the formation of cilia. Involved in cargo protein localization, such as PKD2, at primary cilia. Involved in the presentation of the tumor necrosis factor (TNF) receptor TNFRSF1A on the cell surface, and hence in the modulation of the TNF-induced apoptosis. The sequence is that of Endosome-associated-trafficking regulator 1 from Bos taurus (Bovine).